The following is a 222-amino-acid chain: Eukaryotic translation initiation factor 3 subunit K (222 aa).

A PCI domain is found at 46-208; sequence YDLEANLAVL…KIKTKNITEK (163 aa).

This sequence belongs to the eIF-3 subunit K family. Component of the eukaryotic translation initiation factor 3 (eIF-3) complex. The eIF-3 complex interacts with pix.

It localises to the cytoplasm. Functionally, component of the eukaryotic translation initiation factor 3 (eIF-3) complex, which is involved in protein synthesis of a specialized repertoire of mRNAs and, together with other initiation factors, stimulates binding of mRNA and methionyl-tRNAi to the 40S ribosome. The eIF-3 complex specifically targets and initiates translation of a subset of mRNAs involved in cell proliferation. The sequence is that of Eukaryotic translation initiation factor 3 subunit K from Drosophila erecta (Fruit fly).